A 100-amino-acid chain; its full sequence is MNKLYWLTDLQLFASKKGVGSSKNGRDSNPKYLGAKLGDGQSTKAGQIIYRQRGNKIYPGLNVGQGKDHTLFAKTAGVVKYTKFMGDKTKVSVLPKEDNN.

The propeptide occupies 1–13 (MNKLYWLTDLQLF). The interval 17–39 (KGVGSSKNGRDSNPKYLGAKLGD) is disordered.

It belongs to the bacterial ribosomal protein bL27 family. In terms of processing, the N-terminus is cleaved by ribosomal processing cysteine protease Prp.

This Ureaplasma parvum serovar 3 (strain ATCC 700970) protein is Large ribosomal subunit protein bL27.